The sequence spans 395 residues: Phosphoserine aminotransferase (395 aa).

T20 is subject to Phosphothreonine. 80-81 (GT) contacts pyridoxal 5'-phosphate. S112 is modified (phosphoserine). Pyridoxal 5'-phosphate contacts are provided by W113, T170, D194, and Q217. K218 carries the post-translational modification N6-(pyridoxal phosphate)lysine. 271–272 (NT) is a pyridoxal 5'-phosphate binding site.

The protein belongs to the class-V pyridoxal-phosphate-dependent aminotransferase family. SerC subfamily. Homodimer. Pyridoxal 5'-phosphate is required as a cofactor.

The catalysed reaction is O-phospho-L-serine + 2-oxoglutarate = 3-phosphooxypyruvate + L-glutamate. It catalyses the reaction 4-(phosphooxy)-L-threonine + 2-oxoglutarate = (R)-3-hydroxy-2-oxo-4-phosphooxybutanoate + L-glutamate. It functions in the pathway amino-acid biosynthesis; L-serine biosynthesis; L-serine from 3-phospho-D-glycerate: step 2/3. Phosphoserine aminotransferase (PSAT) is a pyridoxal 5'-phosphate-dependent enzyme involved in the second step of the phosphorylated pathway of serine biosynthesis. Catalyzes the reversible conversion of 3-phosphohydroxypyruvate to phosphoserine and of 3-hydroxy-2-oxo-4-phosphonooxybutanoate to phosphohydroxythreonine. Plays an indirect role in purine biosynthesis. This chain is Phosphoserine aminotransferase, found in Saccharomyces cerevisiae (strain ATCC 204508 / S288c) (Baker's yeast).